The following is a 687-amino-acid chain: A-kinase anchor protein 8 (687 aa).

The interval 1 to 195 is interaction with MCM2; it reads MEQSYGGYGA…FLRGRGQGRF (195 aa). Residues 1–210 are interaction with DPY30; the sequence is MEQSYGGYGA…SSTFIRSDPF (210 aa). Ser72 carries the post-translational modification Phosphoserine. Positions 104–124 are disordered; sequence SKEGGRGGISSGGEGMQDRDS. At Arg109 the chain carries Asymmetric dimethylarginine; alternate. Position 109 is an omega-N-methylarginine; alternate (Arg109). The segment covering 109–118 has biased composition (gly residues); sequence RGGISSGGEG. The interval 109-201 is interaction with DDX5; it reads RGGISSGGEG…QGRFQDRSNS (93 aa). Residues 127-152 are nuclear matrix targeting site; that stretch reads RFQPYESYDSRPCMPEHTPYRPSYSY. A disordered region spans residues 189–221; the sequence is GRGQGRFQDRSNSSTFIRSDPFMPPSASSEPLS. Ser199 carries the phosphoserine modification. 2 positions are modified to omega-N-methylarginine: Arg233 and Arg277. The disordered stretch occupies residues 278–380; it reads SQTRIRDWPR…KQRRRDRMRD (103 aa). 2 stretches are compositionally biased toward basic and acidic residues: residues 281-295 and 312-321; these read RIRD…ERFG and PDAKLARADS. Positions 287 to 304 match the Bipartite nuclear localization signal motif; sequence RRRGFERFGPDNMGRKRK. Residue Lys315 forms a Glycyl lysine isopeptide (Lys-Gly) (interchain with G-Cter in SUMO2) linkage. Phosphoserine is present on residues Ser321, Ser326, and Ser337. Acidic residues predominate over residues 322–332; it reads EGDLSENDDGA. Residues 336–358 are compositionally biased toward basic and acidic residues; it reads RSGDEEFRGEDDLCDSRKQRGEK. The tract at residues 385 to 448 is involved in chromatin-binding; sequence RIQFACSVCK…NKKIEKRRQE (64 aa). 2 consecutive C2H2 AKAP95-type zinc fingers follow at residues 390–412 and 479–502; these read CSVC…SKFH and CLAC…SVDH. The segment at 523-565 is involved in condensin complex recruitment; the sequence is SVLNNKHIVKMLEKYLKGEDPFVNETADLETEGDENLGEEKET. Thr553 bears the Phosphothreonine mark. Lys563 is covalently cross-linked (Glycyl lysine isopeptide (Lys-Gly) (interchain with G-Cter in SUMO2)). The interval 568 to 585 is RII-binding; that stretch reads EVAAEVLAEVITAAVKAV. A required for interaction with MYCBP region spans residues 572-589; the sequence is EVLAEVITAAVKAVEGDG. A disordered region spans residues 606–687; it reads VDTAEAGSDS…DAEAKDTPTE (82 aa). Residues 633–648 show a composition bias toward basic and acidic residues; the sequence is RNMEDMARGEAAEARN. The span at 649-666 shows a compositional bias: low complexity; sequence EAAVPAAAAGSPVPVIAI. Ser659 bears the Phosphoserine mark.

The protein belongs to the AKAP95 family. In terms of assembly, binds to dimeric RII-alpha regulatory subunit of PKA during mitosis. Interacts (via C-terminus) with FIGN. Interacts with NCAPD2, CCND1, CCND3, MCM2, RPS6KA1, PDE4A, CASP3. Interacts with DDX5, CCNE1. Interacts with NFKB1; detetcted in the cytoplasm. Interacts with MYCBP; MYCBP is translocated to the nucleus and the interaction prevents the association of the PKA catalytic subunit leading to suppression of PKA activity. Interacts with DPY30; mediating AKAP8 association with at least the MLL4/WBP7 HMT complex. Interacts with HDAC3; increased during mitosis. Interacts with GJA1; in the nucleus and in the nuclear membrane; the nuclear association increases with progress of cell cycle G1, S and G2 phase and decreases in M phase. In terms of processing, phosphorylated on tyrosine residues probably by SRC subfamily protein kinases; multiple phosphorylation is leading to dissociation from nuclear structures implicated in chromatin structural changes. As to expression, widely expressed. The protein has been detected in liver, fibroblasts, granulosa, myoblast, lymphoma and Sertoli cells.

Its subcellular location is the nucleus matrix. It is found in the nucleus. It localises to the nucleolus. The protein resides in the cytoplasm. Anchoring protein that mediates the subcellular compartmentation of cAMP-dependent protein kinase (PKA type II). Acts as an anchor for a PKA-signaling complex onto mitotic chromosomes, which is required for maintenance of chromosomes in a condensed form throughout mitosis. Recruits condensin complex subunit NCAPD2 to chromosomes required for chromatin condensation; the function appears to be independent from PKA-anchoring. May help to deliver cyclin D/E to CDK4 to facilitate cell cycle progression. Required for cell cycle G2/M transition and histone deacetylation during mitosis. In mitotic cells recruits HDAC3 to the vicinity of chromatin leading to deacetylation and subsequent phosphorylation at 'Ser-10' of histone H3; in this function may act redundantly with AKAP8L. Involved in nuclear retention of RPS6KA1 upon ERK activation thus inducing cell proliferation. May be involved in regulation of DNA replication by acting as scaffold for MCM2. Enhances HMT activity of the KMT2 family MLL4/WBP7 complex and is involved in transcriptional regulation. In a teratocarcinoma cell line is involved in retinoic acid-mediated induction of developmental genes implicating H3 'Lys-4' methylation. May be involved in recruitment of active CASP3 to the nucleus in apoptotic cells. May act as a carrier protein of GJA1 for its transport to the nucleus. May play a repressive role in the regulation of rDNA transcription. Preferentially binds GC-rich DNA in vitro. In cells, associates with ribosomal RNA (rRNA) chromatin, preferentially with rRNA promoter and transcribed regions. Involved in modulation of Toll-like receptor signaling. Required for the cAMP-dependent suppression of TNF-alpha in early stages of LPS-induced macrophage activation; the function probably implicates targeting of PKA to NFKB1. The polypeptide is A-kinase anchor protein 8 (Akap8) (Rattus norvegicus (Rat)).